Here is an 83-residue protein sequence, read N- to C-terminus: Conotoxin p21a (83 aa).

2 positions are modified to 4-hydroxyproline; partial: proline 24 and proline 43. A Histidine amide modification is found at histidine 83.

In terms of assembly, may form a non-covalent dimer. Contains 5 disulfide bonds. In terms of tissue distribution, expressed by the venom duct.

The protein resides in the secreted. The chain is Conotoxin p21a from Conus purpurascens (Purple cone).